Here is a 78-residue protein sequence, read N- to C-terminus: UPF0349 protein BH3414 (78 aa).

It belongs to the UPF0349 family.

In Halalkalibacterium halodurans (strain ATCC BAA-125 / DSM 18197 / FERM 7344 / JCM 9153 / C-125) (Bacillus halodurans), this protein is UPF0349 protein BH3414.